The primary structure comprises 419 residues: MFSAVKPLSKYLQFKSIRIYDSVFTIHSRCTVVILLTCSLLLSARQYFGDPIQCISEEKNIEYIQSYCWTMGTYILKLDDFGDQEQALVSPNQEVSYNSAFFSSATTNAPQSSSRVRTRPHFRSSLRRIGEYNEAYARSLSIAEGVGPEIRGQTERQYLRYYQWVIILLLFQSFVFYFPSCLWKVWEGRRLKQLCSEVGDALLSEETYNTRLRMLVKYFTTDYEDMHFCYMAKYVFCEVLNFLISVVNIIVLEVFLNGFWSKYLRALATIPFYDWDRWNRVSSSVFPKIAKCEVLKFGGSGTANVMDNLCILPLNILNEKIFVFLWAWFLLMALMSGLNLLCRLAMICSRYLREQMIRSQLRFMTKRHVKRALRDLTIGDWFLMMKVSVNVNPMLFRDLMQELCELRTSASGSTLESPV.

At 1–21 the chain is on the cytoplasmic side; the sequence is MFSAVKPLSKYLQFKSIRIYD. A helical transmembrane segment spans residues 22–42; sequence SVFTIHSRCTVVILLTCSLLL. Residues 43–162 lie on the Extracellular side of the membrane; sequence SARQYFGDPI…QTERQYLRYY (120 aa). The helical transmembrane segment at 163 to 183 threads the bilayer; that stretch reads QWVIILLLFQSFVFYFPSCLW. The Cytoplasmic segment spans residues 184–238; the sequence is KVWEGRRLKQLCSEVGDALLSEETYNTRLRMLVKYFTTDYEDMHFCYMAKYVFCE. Residues 239-259 form a helical membrane-spanning segment; it reads VLNFLISVVNIIVLEVFLNGF. At 260 to 320 the chain is on the extracellular side; it reads WSKYLRALAT…ILPLNILNEK (61 aa). Residues 321-341 form a helical membrane-spanning segment; sequence IFVFLWAWFLLMALMSGLNLL. The Cytoplasmic portion of the chain corresponds to 342 to 419; sequence CRLAMICSRY…ASGSTLESPV (78 aa).

The protein belongs to the pannexin family. In terms of tissue distribution, expressed in the cortex of the pupal CNS and at low levels in the wing imaginal disk.

Its subcellular location is the cell membrane. It is found in the cell junction. The protein resides in the gap junction. Functionally, structural component of the gap junctions. The polypeptide is Innexin inx5 (Inx5) (Drosophila melanogaster (Fruit fly)).